Consider the following 948-residue polypeptide: Valine--tRNA ligase (948 aa).

Positions 40 to 50 (PNVTGSLHMGH) match the 'HIGH' region motif. The 'KMSKS' region signature appears at 551-555 (KMSKS). Lys554 is an ATP binding site. A coiled-coil region spans residues 879–945 (LIDKGAELAR…GKLAEQHARI (67 aa)).

It belongs to the class-I aminoacyl-tRNA synthetase family. ValS type 1 subfamily. As to quaternary structure, monomer.

It localises to the cytoplasm. The enzyme catalyses tRNA(Val) + L-valine + ATP = L-valyl-tRNA(Val) + AMP + diphosphate. Functionally, catalyzes the attachment of valine to tRNA(Val). As ValRS can inadvertently accommodate and process structurally similar amino acids such as threonine, to avoid such errors, it has a 'posttransfer' editing activity that hydrolyzes mischarged Thr-tRNA(Val) in a tRNA-dependent manner. In Pseudomonas savastanoi pv. phaseolicola (strain 1448A / Race 6) (Pseudomonas syringae pv. phaseolicola (strain 1448A / Race 6)), this protein is Valine--tRNA ligase.